We begin with the raw amino-acid sequence, 750 residues long: Glutamate carboxypeptidase 2 (750 aa).

The Cytoplasmic segment spans residues 1-19 (MWNLLHETDSAVATARRPR). Position 10 is a phosphoserine (S10). The chain crosses the membrane as a helical; Signal-anchor for type II membrane protein span at residues 20-43 (WLCAGALVLAGGFFLLGFLFGWFI). Residues 44-750 (KSSNEATNIT…AAAETLSEVA (707 aa)) lie on the Extracellular side of the membrane. N-linked (GlcNAc...) asparagine glycans are attached at residues N51, N76, N121, N140, N153, and N195. Substrate contacts are provided by R210 and N257. Residues T269 and Y272 each contribute to the Ca(2+) site. Residues 274 to 587 (ANEYAYRRGI…QVRGGMVFEL (314 aa)) form an NAALADase region. Residue N336 is glycosylated (N-linked (GlcNAc...) asparagine). Zn(2+)-binding residues include H377 and D387. E424 contributes to the substrate binding site. The active-site Nucleophile; for NAALADase activity is E424. E425 lines the Zn(2+) pocket. 2 residues coordinate Ca(2+): E433 and E436. D453 contacts Zn(2+). 2 N-linked (GlcNAc...) asparagine glycosylation sites follow: N459 and N476. Substrate is bound by residues 517–518 (SG), N519, 534–536 (RAR), Y552, and 552–553 (YH). Position 553 (H553) interacts with Zn(2+). S628 functions as the Charge relay system in the catalytic mechanism. An N-linked (GlcNAc...) asparagine glycan is attached at N638. Catalysis depends on charge relay system residues D666 and H689. A substrate-binding site is contributed by 699 to 700 (KY).

Belongs to the peptidase M28 family. M28B subfamily. As to quaternary structure, homodimer. Zn(2+) is required as a cofactor. The first two amino acids at the N-terminus of isoform PSMA' appear to be cleaved by limited proteolysis. In terms of processing, the N-terminus is blocked. In terms of tissue distribution, highly expressed in prostate epithelium. Detected in urinary bladder, kidney, testis, ovary, fallopian tube, breast, adrenal gland, liver, esophagus, stomach, small intestine, colon and brain (at protein level). Detected in the small intestine, brain, kidney, liver, spleen, colon, trachea, spinal cord and the capillary endothelium of a variety of tumors. Expressed specifically in jejunum brush border membranes. In the brain, highly expressed in the ventral striatum and brain stem. Also expressed in fetal liver and kidney. Isoform PSMA' is the most abundant form in normal prostate. Isoform PSMA-1 is the most abundant form in primary prostate tumors. Isoform PSMA-9 is specifically expressed in prostate cancer.

The protein resides in the cell membrane. The protein localises to the cytoplasm. It catalyses the reaction Release of an unsubstituted, C-terminal glutamyl residue, typically from Ac-Asp-Glu or folylpoly-gamma-glutamates.. The NAALADase activity is inhibited by beta-NAAG, quisqualic acid, 2-(phosphonomethyl) pentanedioic acid (PMPA) and EDTA. Activated by cobalt. Has both folate hydrolase and N-acetylated-alpha-linked-acidic dipeptidase (NAALADase) activity. Has a preference for tri-alpha-glutamate peptides. In the intestine, required for the uptake of folate. In the brain, modulates excitatory neurotransmission through the hydrolysis of the neuropeptide, N-aceylaspartylglutamate (NAAG), thereby releasing glutamate. Involved in prostate tumor progression. In terms of biological role, also exhibits a dipeptidyl-peptidase IV type activity. In vitro, cleaves Gly-Pro-AMC. The sequence is that of Glutamate carboxypeptidase 2 from Homo sapiens (Human).